A 60-amino-acid chain; its full sequence is Large ribosomal subunit protein uL30 (60 aa).

The protein belongs to the universal ribosomal protein uL30 family. As to quaternary structure, part of the 50S ribosomal subunit.

The chain is Large ribosomal subunit protein uL30 from Streptococcus equi subsp. equi (strain 4047).